A 375-amino-acid chain; its full sequence is Putative glutamate--cysteine ligase 2 (375 aa).

The protein belongs to the glutamate--cysteine ligase type 2 family. YbdK subfamily.

The catalysed reaction is L-cysteine + L-glutamate + ATP = gamma-L-glutamyl-L-cysteine + ADP + phosphate + H(+). In terms of biological role, ATP-dependent carboxylate-amine ligase which exhibits weak glutamate--cysteine ligase activity. The sequence is that of Putative glutamate--cysteine ligase 2 from Azoarcus sp. (strain BH72).